A 516-amino-acid chain; its full sequence is Cytochrome P450 1A1 (516 aa).

The segment at Phe-25–Pro-36 is mitochondrial targeting signal. Ser-63 carries O-linked (GlcNAc) serine glycosylation. Phe-220 is a binding site for substrate. Cys-453 is a heme binding site.

It belongs to the cytochrome P450 family. As to quaternary structure, interacts with cytosolic chaperones HSP70 and HSP90; this interaction is required for initial targeting to mitochondria. Interacts (via mitochondrial targeting signal) with TOMM40 (via N-terminus); this interaction is required for translocation across the mitochondrial outer membrane. Heme is required as a cofactor. Constitutively expressed in liver.

Its subcellular location is the endoplasmic reticulum membrane. The protein localises to the mitochondrion inner membrane. It localises to the microsome membrane. The protein resides in the cytoplasm. The enzyme catalyses an organic molecule + reduced [NADPH--hemoprotein reductase] + O2 = an alcohol + oxidized [NADPH--hemoprotein reductase] + H2O + H(+). The catalysed reaction is estrone + reduced [NADPH--hemoprotein reductase] + O2 = 2-hydroxyestrone + oxidized [NADPH--hemoprotein reductase] + H2O + H(+). It carries out the reaction estrone + reduced [NADPH--hemoprotein reductase] + O2 = 4-hydroxyestrone + oxidized [NADPH--hemoprotein reductase] + H2O + H(+). It catalyses the reaction estrone + reduced [NADPH--hemoprotein reductase] + O2 = 6alpha-hydroxyestrone + oxidized [NADPH--hemoprotein reductase] + H2O + H(+). The enzyme catalyses estrone + reduced [NADPH--hemoprotein reductase] + O2 = 15alpha-hydroxyestrone + oxidized [NADPH--hemoprotein reductase] + H2O + H(+). The catalysed reaction is estrone + reduced [NADPH--hemoprotein reductase] + O2 = 16alpha-hydroxyestrone + oxidized [NADPH--hemoprotein reductase] + H2O + H(+). It carries out the reaction 17beta-estradiol + reduced [NADPH--hemoprotein reductase] + O2 = 2-hydroxy-17beta-estradiol + oxidized [NADPH--hemoprotein reductase] + H2O + H(+). It catalyses the reaction 17beta-estradiol + reduced [NADPH--hemoprotein reductase] + O2 = 4-hydroxy-17beta-estradiol + oxidized [NADPH--hemoprotein reductase] + H2O + H(+). The enzyme catalyses 17beta-estradiol + reduced [NADPH--hemoprotein reductase] + O2 = 6alpha-hydroxy-17beta-estradiol + oxidized [NADPH--hemoprotein reductase] + H2O + H(+). The catalysed reaction is 17beta-estradiol + reduced [NADPH--hemoprotein reductase] + O2 = 7alpha-hydroxy-17beta-estradiol + oxidized [NADPH--hemoprotein reductase] + H2O + H(+). It carries out the reaction 17beta-estradiol + reduced [NADPH--hemoprotein reductase] + O2 = 15alpha-hydroxy-17beta-estradiol + oxidized [NADPH--hemoprotein reductase] + H2O + H(+). It catalyses the reaction (5Z,8Z,11Z)-eicosatrienoate + reduced [NADPH--hemoprotein reductase] + O2 = 19-hydroxy-(5Z,8Z,11Z)-eicosatrienoate + oxidized [NADPH--hemoprotein reductase] + H2O + H(+). The enzyme catalyses (5Z,8Z,11Z,14Z)-eicosatetraenoate + reduced [NADPH--hemoprotein reductase] + O2 = 16-hydroxy-(5Z,8Z,11Z,14Z)-eicosatetraenoate + oxidized [NADPH--hemoprotein reductase] + H2O + H(+). The catalysed reaction is (5Z,8Z,11Z,14Z)-eicosatetraenoate + reduced [NADPH--hemoprotein reductase] + O2 = 17-hydroxy-(5Z,8Z,11Z,14Z)-eicosatetraenoate + oxidized [NADPH--hemoprotein reductase] + H2O + H(+). It carries out the reaction (5Z,8Z,11Z,14Z)-eicosatetraenoate + reduced [NADPH--hemoprotein reductase] + O2 = 18-hydroxy-(5Z,8Z,11Z,14Z)-eicosatetraenoate + oxidized [NADPH--hemoprotein reductase] + H2O + H(+). It catalyses the reaction (5Z,8Z,11Z,14Z)-eicosatetraenoate + reduced [NADPH--hemoprotein reductase] + O2 = 19-hydroxy-(5Z,8Z,11Z,14Z)-eicosatetraenoate + oxidized [NADPH--hemoprotein reductase] + H2O + H(+). The enzyme catalyses (5Z,8Z,11Z,14Z,17Z)-eicosapentaenoate + reduced [NADPH--hemoprotein reductase] + O2 = 19-hydroxy-(5Z,8Z,11Z,14Z,17Z)-eicosapentaenoate + oxidized [NADPH--hemoprotein reductase] + H2O + H(+). The catalysed reaction is (5Z,8Z,11Z,14Z)-eicosatetraenoate + reduced [NADPH--hemoprotein reductase] + O2 = (8R,9S)-epoxy-(5Z,11Z,14Z)-eicosatrienoate + oxidized [NADPH--hemoprotein reductase] + H2O + H(+). It carries out the reaction (5Z,8Z,11Z,14Z)-eicosatetraenoate + reduced [NADPH--hemoprotein reductase] + O2 = (11R,12S)-epoxy-(5Z,8Z,14Z)-eicosatrienoate + oxidized [NADPH--hemoprotein reductase] + H2O + H(+). It catalyses the reaction (5Z,8Z,11Z,14Z)-eicosatetraenoate + reduced [NADPH--hemoprotein reductase] + O2 = (14S,15R)-epoxy-(5Z,8Z,11Z)-eicosatrienoate + oxidized [NADPH--hemoprotein reductase] + H2O + H(+). The enzyme catalyses (5Z,8Z,11Z,14Z)-eicosatetraenoate + reduced [NADPH--hemoprotein reductase] + O2 = (14R,15S)-epoxy-(5Z,8Z,11Z)-eicosatrienoate + oxidized [NADPH--hemoprotein reductase] + H2O + H(+). The catalysed reaction is (5Z,8Z,11Z,14Z,17Z)-eicosapentaenoate + reduced [NADPH--hemoprotein reductase] + O2 = (17R,18S)-epoxy-(5Z,8Z,11Z,14Z)-eicosatetraenoate + oxidized [NADPH--hemoprotein reductase] + H2O + H(+). It carries out the reaction (4Z,7Z,10Z,13Z,16Z,19Z)-docosahexaenoate + reduced [NADPH--hemoprotein reductase] + O2 = (19S,20R)-epoxy-(4Z,7Z,10Z,13Z,16Z)-docosapentaenoate + oxidized [NADPH--hemoprotein reductase] + H2O + H(+). It catalyses the reaction (4Z,7Z,10Z,13Z,16Z,19Z)-docosahexaenoate + reduced [NADPH--hemoprotein reductase] + O2 = (19R,20S)-epoxy-(4Z,7Z,10Z,13Z,16Z)-docosapentaenoate + oxidized [NADPH--hemoprotein reductase] + H2O + H(+). The enzyme catalyses all-trans-retinol + reduced [NADPH--hemoprotein reductase] + O2 = all-trans-retinal + oxidized [NADPH--hemoprotein reductase] + 2 H2O + H(+). The catalysed reaction is all-trans-retinal + reduced [NADPH--hemoprotein reductase] + O2 = all-trans-retinoate + oxidized [NADPH--hemoprotein reductase] + H2O + 2 H(+). It carries out the reaction (13S)-hydroperoxy-(9Z,11E)-octadecadienoate = 13-oxo-(9Z,11E)-octadecadienoate + H2O. It catalyses the reaction (12S)-hydroperoxy-(5Z,8Z,10E,14Z)-eicosatetraenoate = 12-oxo-(5Z,8Z,10E,14Z)-eicosatetraenoate + H2O. The enzyme catalyses (15S)-hydroperoxy-(5Z,8Z,11Z,13E)-eicosatetraenoate = 15-oxo-(5Z,8Z,11Z,13E)-eicosatetraenoate + H2O. The catalysed reaction is (5S)-hydroperoxy-(6E,8Z,11Z,14Z)-eicosatetraenoate = 5-oxo-(6E,8Z,11Z,14Z)-eicosatetraenoate + H2O. The protein operates within steroid hormone biosynthesis. It functions in the pathway lipid metabolism; fatty acid metabolism. Its pathway is cofactor metabolism; retinol metabolism. Functionally, a cytochrome P450 monooxygenase involved in the metabolism of various endogenous substrates, including fatty acids, steroid hormones and vitamins. Mechanistically, uses molecular oxygen inserting one oxygen atom into a substrate, and reducing the second into a water molecule, with two electrons provided by NADPH via cytochrome P450 reductase (CPR; NADPH-ferrihemoprotein reductase). Catalyzes the hydroxylation of carbon-hydrogen bonds. Exhibits high catalytic activity for the formation of hydroxyestrogens from estrone (E1) and 17beta-estradiol (E2), namely 2-hydroxy E1 and E2, as well as D-ring hydroxylated E1 and E2 at the C15alpha and C16alpha positions. Displays different regioselectivities for polyunsaturated fatty acids (PUFA) hydroxylation. Catalyzes the epoxidation of double bonds of certain PUFA. Converts arachidonic acid toward epoxyeicosatrienoic acid (EET) regioisomers, 8,9-, 11,12-, and 14,15-EET, that function as lipid mediators in the vascular system. Displays an absolute stereoselectivity in the epoxidation of eicosapentaenoic acid (EPA) producing the 17(R),18(S) enantiomer. May play an important role in all-trans retinoic acid biosynthesis in extrahepatic tissues. Catalyzes two successive oxidative transformation of all-trans retinol to all-trans retinal and then to the active form all-trans retinoic acid. May also participate in eicosanoids metabolism by converting hydroperoxide species into oxo metabolites (lipoxygenase-like reaction, NADPH-independent). The chain is Cytochrome P450 1A1 (CYP1A1) from Cavia porcellus (Guinea pig).